The chain runs to 160 residues: Lymphocyte antigen 86 (160 aa).

A signal peptide spans 1–20 (MKTLNVLALVLVLLCINAST). 3 cysteine pairs are disulfide-bonded: cysteine 28–cysteine 53, cysteine 40–cysteine 149, and cysteine 97–cysteine 107.

M-shaped tetramer of two CD180-LY86 heterodimers. Detected in the macrophage-like 10.4 cells.

The protein localises to the secreted. It is found in the extracellular space. Functionally, may cooperate with CD180 and TLR4 to mediate the innate immune response to bacterial lipopolysaccharide (LPS) and cytokine production. Important for efficient CD180 cell surface expression. This chain is Lymphocyte antigen 86 (LY86), found in Gallus gallus (Chicken).